The sequence spans 161 residues: MIIQKILQGAVLDIVQKKLVDKLASNKQFQQMSVQFKDKMDEITGEKPAKRNIHGHNNHTRSSNHPHSGAHSNINHNNNNNINFQNVKYTNDIHENARIYEQQRRLQQNGGGGDSSSSRSSNNNNSTNDNKPQSKNYFTHLFESFKEELNDEADKLNGKKK.

Disordered regions lie at residues 47-83 (KPAK…NNIN) and 104-137 (RRLQ…SKNY). The span at 50-64 (KRNIHGHNNHTRSSN) shows a compositional bias: basic residues. Low complexity-rich tracts occupy residues 73–83 (NINHNNNNNIN) and 115–130 (SSSS…TNDN).

This is an uncharacterized protein from Dictyostelium discoideum (Social amoeba).